A 212-amino-acid chain; its full sequence is Nitric oxide synthase (212 aa).

Tyr11 serves as a coordination point for heme b. The tract at residues 30–50 (KKRAIGFKKLAKAVKFSTKLM) is calmodulin-binding. The region spanning 60–212 (ATILYATETG…AVDTLLEELG (153 aa)) is the Flavodoxin-like domain. A disordered region spans residues 155 to 175 (SYSDSRKSSSDEPEHKDNFES). The span at 158–173 (DSRKSSSDEPEHKDNF) shows a compositional bias: basic and acidic residues. 186–212 (AFGLGSRAYPHFCAFARAVDTLLEELG) contributes to the FMN binding site.

Belongs to the NOS family. Requires heme b as cofactor. FAD is required as a cofactor. FMN serves as cofactor.

It carries out the reaction 2 L-arginine + 3 NADPH + 4 O2 + H(+) = 2 L-citrulline + 2 nitric oxide + 3 NADP(+) + 4 H2O. Produces nitric oxide (NO) which is a messenger molecule with diverse functions throughout the body. This chain is Nitric oxide synthase, found in Squalus acanthias (Spiny dogfish).